Consider the following 472-residue polypeptide: Eukaryotic translation initiation factor 2 subunit 3 (472 aa).

Residue Ala2 is modified to N-acetylalanine. Ser16 carries the phosphoserine modification. In terms of domain architecture, tr-type G spans 39–248; that stretch reads QATINIGTIG…IVKKIPVPPR (210 aa). The tract at residues 48–55 is G1; it reads GHVAHGKS. 51–56 lines the GTP pocket; sequence AHGKST. The tract at residues 76-80 is G2; it reads NITIK. A G3 region spans residues 134 to 137; sequence DCPG. GTP-binding positions include 190–193 and 225–227; these read NKID and SAQ. The tract at residues 190–193 is G4; that stretch reads NKID. The G5 stretch occupies residues 225 to 227; that stretch reads SAQ. Positions 457–469 are interacts with CDC123; sequence GQIRRGVTIKPTV.

This sequence belongs to the TRAFAC class translation factor GTPase superfamily. Classic translation factor GTPase family. EIF2G subfamily. As to quaternary structure, eukaryotic translation initiation factor 2 eIF2 is a heterotrimeric complex composed of an alpha (EIF2S1), a beta (EIF2S2) and a gamma (EIF2S3) chain. eIF2 is member of the 43S pre-initiation complex (43S PIC). Interacts (via C-terminus) with CDC123; the interaction is direct.

The protein localises to the cytoplasm. It localises to the cytosol. The enzyme catalyses GTP + H2O = GDP + phosphate + H(+). In terms of biological role, member of the eIF2 complex that functions in the early steps of protein synthesis by forming a ternary complex with GTP and initiator tRNA. This complex binds to a 40S ribosomal subunit, followed by mRNA binding to form the 43S pre-initiation complex (43S PIC). Junction of the 60S ribosomal subunit to form the 80S initiation complex is preceded by hydrolysis of the GTP bound to eIF2 and release of an eIF2-GDP binary complex. In order for eIF2 to recycle and catalyze another round of initiation, the GDP bound to eIF2 must exchange with GTP by way of a reaction catalyzed by eIF-2B. The polypeptide is Eukaryotic translation initiation factor 2 subunit 3 (EIF2S3) (Pongo abelii (Sumatran orangutan)).